Reading from the N-terminus, the 110-residue chain is Ribonuclease P protein component 4 (110 aa).

The Zn(2+) site is built by cysteine 65, cysteine 68, cysteine 94, and cysteine 97.

This sequence belongs to the eukaryotic/archaeal RNase P protein component 4 family. In terms of assembly, consists of a catalytic RNA component and at least 5 protein subunits. Zn(2+) is required as a cofactor.

Its subcellular location is the cytoplasm. It carries out the reaction Endonucleolytic cleavage of RNA, removing 5'-extranucleotides from tRNA precursor.. In terms of biological role, part of ribonuclease P, a protein complex that generates mature tRNA molecules by cleaving their 5'-ends. The polypeptide is Ribonuclease P protein component 4 (Methanococcus maripaludis (strain DSM 14266 / JCM 13030 / NBRC 101832 / S2 / LL)).